The sequence spans 70 residues: U-scoloptoxin(20)-Sm1a (70 aa).

Positions 1 to 24 (MKKRSQVFCIFIAMVLLILPLSMS) are cleaved as a signal peptide.

Belongs to the scoloptoxin-20 family. In terms of processing, contains 3 disulfide bonds. Expressed by the venom gland.

Its subcellular location is the secreted. This chain is U-scoloptoxin(20)-Sm1a, found in Scolopendra morsitans (Tanzanian blue ringleg centipede).